The sequence spans 145 residues: Large ribosomal subunit protein uL11 (145 aa).

The protein belongs to the universal ribosomal protein uL11 family. Part of the ribosomal stalk of the 50S ribosomal subunit. Interacts with L10 and the large rRNA to form the base of the stalk. L10 forms an elongated spine to which L12 dimers bind in a sequential fashion forming a multimeric L10(L12)X complex. One or more lysine residues are methylated.

In terms of biological role, forms part of the ribosomal stalk which helps the ribosome interact with GTP-bound translation factors. This is Large ribosomal subunit protein uL11 from Sulfurihydrogenibium sp. (strain YO3AOP1).